Here is a 629-residue protein sequence, read N- to C-terminus: Methyl-accepting chemotaxis protein PctB (629 aa).

At 1–10 the chain is on the cytoplasmic side; it reads MIKSLKFSHK. A helical membrane pass occupies residues 11–31; the sequence is ILLAAALVVIATFSLFTLYND. The Periplasmic portion of the chain corresponds to 32–276; that stretch reads SLQRASIRED…AYAMLTKLRT (245 aa). One can recognise a Cache domain in the interval 37 to 260; sequence SIREDLEDYL…LSGLDWYIGI (224 aa). Residues Tyr109, Ser115, Tyr121, 126-128, Glu146, and Asp173 contribute to the L-arginine site; that span reads RPW. L-glutamine is bound by residues Ser115, Tyr121, 126–128, 144–146, and Asp173; these read RPW and YME. The helical transmembrane segment at 277-297 threads the bilayer; it reads SAIVAALIAVVAIVLLLGMLI. Residues 298-352 form the HAMP domain; the sequence is RVLMQPLTDMGRAMQDIAQGEGDLTKRLKVTSNDEFGALAISFNRFVERIHESIR. Residues 298–629 lie on the Cytoplasmic side of the membrane; the sequence is RVLMQPLTDM…LRQLVDSFKI (332 aa). A Methyl-accepting transducer domain is found at 357–593; it reads TARQLHDVAQ…SLNMDITEIN (237 aa). A disordered region spans residues 405 to 424; that stretch reads RNAADASHHASDANHQAEDG. Over residues 410–424 the composition is skewed to basic and acidic residues; that stretch reads ASHHASDANHQAEDG.

It belongs to the methyl-accepting chemotaxis (MCP) protein family. As to quaternary structure, monomer in the absence and presence of ligands.

The protein localises to the cell inner membrane. Chemotactic-signal transducers respond to changes in the concentration of attractants and repellents in the environment, transduce a signal from the outside to the inside of the cell, and facilitate sensory adaptation through the variation of the level of methylation. Responds to L-Arg, L-Gln, L-Ala, L-Glu, L-Lys, L-Met and L-Tyr. Also involved in repellent responses to trichloroethylene (TCE), chloroform and methylthiocyanate. This Pseudomonas aeruginosa (strain ATCC 15692 / DSM 22644 / CIP 104116 / JCM 14847 / LMG 12228 / 1C / PRS 101 / PAO1) protein is Methyl-accepting chemotaxis protein PctB (pctB).